Consider the following 23-residue polypeptide: Potassium channel toxin alpha-KTx 13.1 (23 aa).

3 disulfides stabilise this stretch: C2/C15, C5/C20, and C9/C22. An interaction with Ca(2+)-activated K(+) channels region spans residues 13-20 (GKCINGRC).

In terms of tissue distribution, expressed by the venom gland.

It localises to the secreted. Its function is as follows. Blocks reversibly Shaker B potassium channels. Also displaces binding of noxiustoxin to mouse brain synaptosome membranes. This Tityus obscurus (Amazonian scorpion) protein is Potassium channel toxin alpha-KTx 13.1.